A 118-amino-acid chain; its full sequence is D-dopachrome decarboxylase (118 aa).

The residue at position 2 (P2) is an N-acetylproline.

Belongs to the MIF family. As to quaternary structure, homotrimer.

It is found in the cytoplasm. The catalysed reaction is D-dopachrome + H(+) = 5,6-dihydroxyindole + CO2. In terms of biological role, tautomerization of D-dopachrome with decarboxylation to give 5,6-dihydroxyindole (DHI). The polypeptide is D-dopachrome decarboxylase (ddt) (Xenopus tropicalis (Western clawed frog)).